The chain runs to 137 residues: Basic phospholipase A2 homolog 2 (137 aa).

A signal peptide spans 1 to 16; sequence MRTLWIMAVLLVGVEG. Intrachain disulfides connect Cys42/Cys131, Cys44/Cys60, Cys59/Cys111, Cys65/Cys137, Cys66/Cys104, Cys73/Cys97, and Cys91/Cys102. The segment at 121 to 133 is important for membrane-damaging activities in eukaryotes and bacteria; heparin-binding; the sequence is KKYRYYLKPLCKK.

Belongs to the phospholipase A2 family. Group II subfamily. K49 sub-subfamily. In terms of assembly, homodimer; non-covalently linked. Binds to heparin. Post-translationally, it binds long-chain fatty acids covalently by a rapid, spontaneous, and autocatalytic process. When acylated, it binds to the surface of liposomes and isolated muscle membranes, with the fatty acid moiety inserted into the lipid bilayer and possibly acting as an anchor. Expressed by the venom gland.

The protein localises to the secreted. Its activity is regulated as follows. Heparin inhibits the myotoxic activity. Suramin inhibits the myotoxic activity. High level of membrane cholesterol content reduces cytolytic activity, whereas low level of membrane cholesterol content increases cytolytic activity. Snake venom phospholipase A2 homolog that lacks enzymatic activity. Is myotoxic and induces a dose-dependent edema in the mouse foot pad. Also exhibits strong anticoagulant effects by binding to factor Xa (F10) and inhibiting the prothrombinase activity (IC(50) is 3 nM). In addition, it shows cytotoxic activity to a variety of cell types and bactericidal activity to a variety of Gram-negative and Gram-positive bacteria. Also induces a very rapid release of large amounts of potassium ions and ATP from muscle cells, which accounts for the pain reaction characteristic of viperid envenomations. The released ATP amplifies the effect of the myotoxins, acting as a 'danger signal', which spreads and causes further damage by acting on purinergic receptors. A model of myotoxic mechanism has been proposed: an apo Lys49-PLA2 is activated by the entrance of a hydrophobic molecule (e.g. fatty acid) at the hydrophobic channel of the protein leading to a reorientation of a monomer. This reorientation causes a transition between 'inactive' to 'active' states, causing alignment of C-terminal and membrane-docking sites (MDoS) side-by-side and putting the membrane-disruption sites (MDiS) in the same plane, exposed to solvent and in a symmetric position for both monomers. The MDoS region stabilizes the toxin on membrane by the interaction of charged residues with phospholipid head groups. Subsequently, the MDiS region destabilizes the membrane with penetration of hydrophobic residues. This insertion causes a disorganization of the membrane, allowing an uncontrolled influx of ions (i.e. calcium and sodium), and eventually triggering irreversible intracellular alterations and cell death. The polypeptide is Basic phospholipase A2 homolog 2 (Bothrops asper (Terciopelo)).